The sequence spans 351 residues: Probable V-type proton ATPase subunit d (351 aa).

Belongs to the V-ATPase V0D/AC39 subunit family. As to quaternary structure, V-ATPase is a heteromultimeric enzyme composed of a peripheral catalytic V1 complex (components A to H) attached to an integral membrane V0 proton pore complex (components: a, c, c', c'' and d).

Functionally, subunit of the integral membrane V0 complex of vacuolar ATPase. Vacuolar ATPase is responsible for acidifying a variety of intracellular compartments in eukaryotic cells, thus providing most of the energy required for transport processes in the vacuolar system. This chain is Probable V-type proton ATPase subunit d, found in Oryza sativa subsp. japonica (Rice).